The chain runs to 187 residues: Early E3 20.6 kDa glycoprotein (187 aa).

N-linked (GlcNAc...) asparagine; by host glycosylation is found at Asn30, Asn73, Asn117, Asn134, and Asn135.

Belongs to the adenoviridae E3_20 family.

This Human adenovirus B serotype 11 (strain Slobiski) (HAdV-11) protein is Early E3 20.6 kDa glycoprotein.